A 596-amino-acid chain; its full sequence is MLQTIYESESYFSSDGVAGREQLLAEQRMHAMIGKDIKSEFPIGLESISPLDLRTDLRTAVPVGDPGLREKQLQQELLIIKQQQQIQKQLLIAEFQKQHENLTRQHQVQLQEHLKLQQELLAMKQQQELLEREKEQKMEQQRKEQEAERHRQEQQLCHPRSKDRVKERAVASTEVKQKLQEFILSKSATKEPLTNGTSHSMGRHPKLWYTAAHHTSLDQSSPPPSGTSPTYKCPPPGNQDDFPLRKTASEPNLKVRSRLKQKVVERRSSPLLRRKDSIVSSSYKKRIFEVAESSVSSSSPVSGPSSPNNGPVAMEAEHETPVLSVNSRIENLVSHHHLVHHERSLSLLNLYTSPSLPNITLGLHATATQLNTSSSLKEQQKYDPQAPRQGVSMAGQYAGGIPTSSNHVSLEGKANSHQAILQHLLLKEQMRQQKILASGGTPVLHQSPLAAKDRVSPAGRVAHKLPRHRPLHRTQSAPLPQSTLAQLVIQQQHQQFLEKQKQYQQQIHMNKILSKSIEQLRQPEGHLEEAEEDLHGDNLMQEKSSSIDNTRSYSSTDLRTGPFGSVKVKEEPPDSENEIKTHLQSEQKSVFAQQVT.

Composition is skewed to basic and acidic residues over residues 132–153 and 160–172; these read REKE…HRQE and RSKD…AVAS. 4 disordered regions span residues 132 to 172, 214 to 258, 293 to 313, and 522 to 596; these read REKE…AVAS, HTSL…VRSR, SSVS…GPVA, and QPEG…QQVT. Residues 172–222 are interaction with mef2; sequence STEVKQKLQEFILSKSATKEPLTNGTSHSMGRHPKLWYTAAHHTSLDQSSP. Residues 221–237 show a composition bias toward pro residues; the sequence is SPPPSGTSPTYKCPPPG. A compositionally biased stretch (low complexity) spans 293–312; it reads SSVSSSSPVSGPSSPNNGPV. Over residues 522–536 the composition is skewed to basic and acidic residues; sequence QPEGHLEEAEEDLHG. A compositionally biased stretch (polar residues) spans 541–558; that stretch reads QEKSSSIDNTRSYSSTDL. Positions 567–585 are enriched in basic and acidic residues; that stretch reads KVKEEPPDSENEIKTHLQS. Residues 586–596 are compositionally biased toward polar residues; it reads EQKSVFAQQVT.

The protein belongs to the histone deacetylase family. HD type 2 subfamily. In terms of assembly, homodimer. Interacts with mef2. In terms of tissue distribution, broadly expressed.

Its subcellular location is the nucleus. It catalyses the reaction N(6)-acetyl-L-lysyl-[histone] + H2O = L-lysyl-[histone] + acetate. Its function is as follows. Devoided of intrinsic deacetylase activity, promotes the deacetylation of lysine residues on the N-terminal part of the core histones (H2A, H2B, H3 and H4) by recruiting other histone deacetylases. Histone deacetylation gives a tag for epigenetic repression and plays an important role in transcriptional regulation, cell cycle progression and developmental events. Represses MEF2-dependent transcription. In Xenopus laevis (African clawed frog), this protein is Histone deacetylase 9 (hdac9).